The following is a 95-amino-acid chain: UPF0358 protein GTNG_0942 (95 aa).

The protein belongs to the UPF0358 family.

This is UPF0358 protein GTNG_0942 from Geobacillus thermodenitrificans (strain NG80-2).